A 414-amino-acid polypeptide reads, in one-letter code: Serine hydroxymethyltransferase (414 aa).

(6S)-5,6,7,8-tetrahydrofolate contacts are provided by residues Leu-116 and 120–122 (GHL). Lys-225 carries the post-translational modification N6-(pyridoxal phosphate)lysine. 349 to 351 (SPF) contributes to the (6S)-5,6,7,8-tetrahydrofolate binding site.

It belongs to the SHMT family. As to quaternary structure, homodimer. Pyridoxal 5'-phosphate is required as a cofactor.

The protein resides in the cytoplasm. The catalysed reaction is (6R)-5,10-methylene-5,6,7,8-tetrahydrofolate + glycine + H2O = (6S)-5,6,7,8-tetrahydrofolate + L-serine. It functions in the pathway one-carbon metabolism; tetrahydrofolate interconversion. Its pathway is amino-acid biosynthesis; glycine biosynthesis; glycine from L-serine: step 1/1. Its function is as follows. Catalyzes the reversible interconversion of serine and glycine with tetrahydrofolate (THF) serving as the one-carbon carrier. This reaction serves as the major source of one-carbon groups required for the biosynthesis of purines, thymidylate, methionine, and other important biomolecules. Also exhibits THF-independent aldolase activity toward beta-hydroxyamino acids, producing glycine and aldehydes, via a retro-aldol mechanism. In Oenococcus oeni (strain ATCC BAA-331 / PSU-1), this protein is Serine hydroxymethyltransferase.